A 475-amino-acid chain; its full sequence is CAAX prenyl protease 1 homolog (475 aa).

Residues 1 to 18 (MGMWASVDAMWDFPAEKR) lie on the Lumenal side of the membrane. A helical transmembrane segment spans residues 19-39 (IFGAVLLFSWTVYLWETFLAQ). The Nuclear portion of the chain corresponds to 40-81 (RQRRIYKTTTRVPAELEQIMDSDTFEKSRLYQLDKSTFSFWS). Residues 82-102 (GLYSEVEGTFILLFGGIPYLW) traverse the membrane as a helical segment. Topologically, residues 103–123 (RLSGQFCSSAGFGPEYEIIQS) are lumenal. Residues 124 to 144 (LVFLLLATLFSALTGLPWSLY) form a helical membrane-spanning segment. Topologically, residues 145 to 170 (NTFVIEEKHGFNHQTLEFFMKDAIKK) are nuclear. The chain crosses the membrane as a helical span at residues 171-191 (FIVTQCILLPVSALLLYIIKI). At 192 to 195 (GGDY) the chain is on the lumenal side. Residues 196–216 (FFIYAWLFTLVVSLVLVTIYA) form a helical membrane-spanning segment. Topologically, residues 217 to 347 (DYIAPLFDKF…GHWKLGHTVK (131 aa)) are nuclear. The disordered stretch occupies residues 293-314 (DNQEESGMEARNEGEGDSEEVK). Residues 300–314 (MEARNEGEGDSEEVK) show a composition bias toward basic and acidic residues. His335 is a binding site for Zn(2+). Residue Glu336 is part of the active site. His339 contributes to the Zn(2+) binding site. A helical membrane pass occupies residues 348–368 (NIIISQMNSFLCFFLFAVLIG). At 369–382 (RRELFAAFGFYDSQ) the chain is on the lumenal side. A helical transmembrane segment spans residues 383–405 (PTLIGLLIIFQFIFSPYNEVLSF). Residues 406 to 475 (CLTVLSRRFE…LQALKNAKQD (70 aa)) lie on the Nuclear side of the membrane. Glu415 is a binding site for Zn(2+).

It belongs to the peptidase M48A family. Zn(2+) serves as cofactor.

It localises to the endoplasmic reticulum membrane. It is found in the nucleus inner membrane. Its subcellular location is the early endosome membrane. The protein resides in the late endosome membrane. It catalyses the reaction Hydrolyzes the peptide bond -P2-(S-farnesyl or geranylgeranyl)C-P1'-P2'-P3'-COOH where P1' and P2' are amino acids with aliphatic side chains and P3' is any C-terminal residue.. Inhibited by HIV protease inhibitors, such as lopinavir, tipranavir and nelfinavir, leading to defects in lamin A/LMNA maturation and accumulation of prelamin-A/C precursors in cells. This causes defects in nuclear envelope integrity and release of DNA in the cytosol, activating the AIM2 inflammasome. Its function is as follows. Transmembrane metalloprotease whose catalytic activity is critical for processing lamin A/LMNA on the inner nuclear membrane and clearing clogged translocons on the endoplasmic reticulum. Proteolytically removes the C-terminal three residues of farnesylated proteins. Also plays an antiviral role independently of its protease activity by restricting enveloped RNA and DNA viruses. Mechanistically, controls IFITM antiviral pathway to hinder viruses from breaching the endosomal barrier by modulating membrane fluidity. This is CAAX prenyl protease 1 homolog from Mus musculus (Mouse).